Reading from the N-terminus, the 279-residue chain is Shikimate dehydrogenase (NADP(+)) (279 aa).

Shikimate-binding positions include 14–16 (SLS) and threonine 62. Lysine 66 serves as the catalytic Proton acceptor. Positions 87 and 103 each coordinate shikimate. NADP(+) contacts are provided by residues 127 to 131 (GAGGA), 151 to 156 (NRTKAK), and methionine 215. Tyrosine 217 contacts shikimate. Glycine 239 lines the NADP(+) pocket.

It belongs to the shikimate dehydrogenase family. In terms of assembly, homodimer.

The catalysed reaction is shikimate + NADP(+) = 3-dehydroshikimate + NADPH + H(+). It participates in metabolic intermediate biosynthesis; chorismate biosynthesis; chorismate from D-erythrose 4-phosphate and phosphoenolpyruvate: step 4/7. In terms of biological role, involved in the biosynthesis of the chorismate, which leads to the biosynthesis of aromatic amino acids. Catalyzes the reversible NADPH linked reduction of 3-dehydroshikimate (DHSA) to yield shikimate (SA). The sequence is that of Shikimate dehydrogenase (NADP(+)) from Alteromonas mediterranea (strain DSM 17117 / CIP 110805 / LMG 28347 / Deep ecotype).